A 421-amino-acid polypeptide reads, in one-letter code: Queuine tRNA-ribosyltransferase accessory subunit 2 (421 aa).

Zn(2+) contacts are provided by C328, C330, C333, and H359.

This sequence belongs to the queuine tRNA-ribosyltransferase family. QTRT2 subfamily. In terms of assembly, heterodimer of a catalytic subunit and an accessory subunit. Requires Zn(2+) as cofactor.

The protein localises to the cytoplasm. In terms of biological role, non-catalytic subunit of the queuine tRNA-ribosyltransferase (TGT) that catalyzes the base-exchange of a guanine (G) residue with queuine (Q) at position 34 (anticodon wobble position) in tRNAs with GU(N) anticodons (tRNA-Asp, -Asn, -His and -Tyr), resulting in the hypermodified nucleoside queuosine (7-(((4,5-cis-dihydroxy-2-cyclopenten-1-yl)amino)methyl)-7-deazaguanosine). The sequence is that of Queuine tRNA-ribosyltransferase accessory subunit 2 from Aedes aegypti (Yellowfever mosquito).